The primary structure comprises 460 residues: tRNA hydroxylation protein P (460 aa).

It belongs to the peptidase U32 family.

Involved in prephenate-dependent formation of 5-hydroxyuridine (ho5U) modification at position 34 in tRNAs, the first step in 5-carboxymethoxyuridine (cmo5U) biosynthesis. This Haemophilus influenzae (strain ATCC 51907 / DSM 11121 / KW20 / Rd) protein is tRNA hydroxylation protein P.